The following is a 225-amino-acid chain: ATP-dependent Clp protease proteolytic subunit (225 aa).

Serine 101 functions as the Nucleophile in the catalytic mechanism. Residue histidine 126 is part of the active site.

This sequence belongs to the peptidase S14 family. In terms of assembly, component of the chloroplastic Clp protease core complex.

It is found in the plastid. The protein resides in the chloroplast stroma. It carries out the reaction Hydrolysis of proteins to small peptides in the presence of ATP and magnesium. alpha-casein is the usual test substrate. In the absence of ATP, only oligopeptides shorter than five residues are hydrolyzed (such as succinyl-Leu-Tyr-|-NHMec, and Leu-Tyr-Leu-|-Tyr-Trp, in which cleavage of the -Tyr-|-Leu- and -Tyr-|-Trp bonds also occurs).. Its function is as follows. Cleaves peptides in various proteins in a process that requires ATP hydrolysis. Has a chymotrypsin-like activity. Plays a major role in the degradation of misfolded proteins. The protein is ATP-dependent Clp protease proteolytic subunit of Chlorokybus atmophyticus (Soil alga).